The following is a 209-amino-acid chain: Uridine kinase (209 aa).

12–19 (GGSGSGKT) serves as a coordination point for ATP.

This sequence belongs to the uridine kinase family.

The protein resides in the cytoplasm. The catalysed reaction is uridine + ATP = UMP + ADP + H(+). It catalyses the reaction cytidine + ATP = CMP + ADP + H(+). It participates in pyrimidine metabolism; CTP biosynthesis via salvage pathway; CTP from cytidine: step 1/3. The protein operates within pyrimidine metabolism; UMP biosynthesis via salvage pathway; UMP from uridine: step 1/1. This Listeria monocytogenes serotype 4b (strain CLIP80459) protein is Uridine kinase.